The sequence spans 1009 residues: Type VII secretion system accessory factor EsaA (1009 aa).

Residues Ile7–Val27 traverse the membrane as a helical segment. The span at Thr680–Glu697 shows a compositional bias: basic and acidic residues. A disordered region spans residues Thr680–Lys707. 5 consecutive transmembrane segments (helical) span residues Ile822–Phe842, Val869–Ile889, Lys903–Leu923, Ser928–Leu948, and Ile979–Phe999.

Belongs to the EsaA family. As to quaternary structure, homodimer. Interacts with EssB.

The protein localises to the cell membrane. In terms of biological role, component of the type VII secretion system (Ess). Provides together with EssB and other components such as EssC and EssE a secretion platform across the cytoplasmic membrane in the host. The polypeptide is Type VII secretion system accessory factor EsaA (Staphylococcus aureus (strain COL)).